Reading from the N-terminus, the 86-residue chain is Putative defensin-like protein 9 (86 aa).

The first 29 residues, 1–29 (MKSSMQLISTLFFLVILVVAPGMKMVVEG), serve as a signal peptide directing secretion. Pyrrolidone carboxylic acid is present on Q30. Intrachain disulfides connect C34/C79, C45/C65, C51/C73, and C55/C75.

This sequence belongs to the DEFL family.

Its subcellular location is the secreted. The chain is Putative defensin-like protein 9 (LCR76) from Arabidopsis thaliana (Mouse-ear cress).